A 325-amino-acid polypeptide reads, in one-letter code: Alpha-cuprenene synthase COP6 (325 aa).

5 residues coordinate Mg(2+): Asp102, Glu166, Asn224, Ser228, and Glu232.

The protein belongs to the trichodiene synthase family. It depends on Mg(2+) as a cofactor.

Alpha-cuprenene synthase; part of the gene cluster that mediates the biosynthesis of alpha-cuprenene and oxidized derivatives. The alpha-cuprenene synthase COP6 is the only sesquiterpene synthase identified in C.cinereus that appears to be part of a biosynthetic gene cluster and is highly specific since it catalyzes the cyclization of (2E,6E)-farnesyl diphosphate into only one product, alpha-cuprenene. COP6 is also able to perform the cyclization of geranyl diphosphate. The cytochrome P450 monooxygenase COX2 then oxidizes the cyclohexadiene ring of alpha-cuprenene at positions 1 and 4, yielding first alpha-cuparene, followed by alpha-cuparophenol and a further yet unidentified compound resulting from one additional oxidation step. The cytochrome P450 monooxygenase COX1 then likely catalyzes the oxidation at position 9 of the pentane ring of alpha-cuprenene to give the corresponding hydroxy or ketone derivatives. In Coprinopsis cinerea (strain Okayama-7 / 130 / ATCC MYA-4618 / FGSC 9003) (Inky cap fungus), this protein is Alpha-cuprenene synthase COP6.